The sequence spans 399 residues: CLOCK-interacting pacemaker (399 aa).

Basic and acidic residues predominate over residues 1-12 (MERKNSSRESPR). Disordered regions lie at residues 1–85 (MERK…AKNA) and 159–224 (SYTK…KLAE). S213 carries the post-translational modification Phosphoserine. Residues 333–359 (TLKTKELIRQNQATQVELDQLKEQTQL) are a coiled coil. Residues 378–388 (SLTPGSSNTGS) are compositionally biased toward polar residues. The tract at residues 378–399 (SLTPGSSNTGSDLEAFSDHPDI) is disordered.

In terms of assembly, interacts with CLOCK. Forms a ternary complex with the CLOCK-BMAL1 heterodimer. Interacts with CAD and HSPA5.

The protein resides in the nucleus. It is found in the cytoplasm. Its subcellular location is the cytosol. Its function is as follows. Transcriptional repressor which may act as a negative-feedback regulator of CLOCK-BMAL1 transcriptional activity in the circadian-clock mechanism. May stimulate BMAL1-dependent phosphorylation of CLOCK. However, the physiological relevance of these observations is unsure, since experiments in knockout mice showed that CIPC is not critially required for basic circadian clock. The protein is CLOCK-interacting pacemaker (CIPC) of Pongo abelii (Sumatran orangutan).